The primary structure comprises 183 residues: V-type ATP synthase subunit E (183 aa).

Belongs to the V-ATPase E subunit family.

Its function is as follows. Produces ATP from ADP in the presence of a proton gradient across the membrane. The sequence is that of V-type ATP synthase subunit E from Fusobacterium nucleatum subsp. nucleatum (strain ATCC 25586 / DSM 15643 / BCRC 10681 / CIP 101130 / JCM 8532 / KCTC 2640 / LMG 13131 / VPI 4355).